A 344-amino-acid polypeptide reads, in one-letter code: Arginine N-succinyltransferase (344 aa).

Leucine 125 lines the succinyl-CoA pocket. Histidine 229 acts as the Proton donor in catalysis.

The protein belongs to the arginine N-succinyltransferase family.

The enzyme catalyses succinyl-CoA + L-arginine = N(2)-succinyl-L-arginine + CoA + H(+). The protein operates within amino-acid degradation; L-arginine degradation via AST pathway; L-glutamate and succinate from L-arginine: step 1/5. In terms of biological role, catalyzes the transfer of succinyl-CoA to arginine to produce N(2)-succinylarginine. This Shigella flexneri protein is Arginine N-succinyltransferase.